The sequence spans 571 residues: Quinone-dependent D-lactate dehydrogenase (571 aa).

The 230-residue stretch at glycine 44–arginine 273 folds into the FAD-binding PCMH-type domain. FAD contacts are provided by residues alanine 78–glycine 82, glycine 86–serine 87, glycine 145, serine 152, glycine 162, and valine 263.

The protein belongs to the quinone-dependent D-lactate dehydrogenase family. It depends on FAD as a cofactor.

It is found in the cell membrane. It carries out the reaction (R)-lactate + a quinone = a quinol + pyruvate. Its function is as follows. Catalyzes the oxidation of D-lactate to pyruvate. Also has weak activity with L-lactate and DL-2-hydroxybutyrate. Electrons derived from D-lactate oxidation enter the electron transport chain. Essential for growth with D-lactate as sole carbon and energy source. The polypeptide is Quinone-dependent D-lactate dehydrogenase (Corynebacterium glutamicum (strain ATCC 13032 / DSM 20300 / JCM 1318 / BCRC 11384 / CCUG 27702 / LMG 3730 / NBRC 12168 / NCIMB 10025 / NRRL B-2784 / 534)).